The primary structure comprises 577 residues: Sensor histidine kinase YesM (577 aa).

Topologically, residues 1–17 (MKKRVAGWYRRMKIKDK) are cytoplasmic. A helical membrane pass occupies residues 18–38 (LFVFLSLIMAVSFLFVYSGVQ). The Extracellular segment spans residues 39–286 (YAFHVYDEQI…PFDQMFAKIS (248 aa)). A helical membrane pass occupies residues 287–307 (FMKTVIGTCFLLFFCVVLLFG). The Cytoplasmic segment spans residues 308–577 (RKIANSITEP…ITIPCRNEVV (270 aa)). The HAMP domain occupies 312–368 (NSITEPIEQLVTAMKSVQHSGIEAGVSLSLPEHTQDEAGMLNRHFTVMMKRINELME). Residues 365-574 (ELMEENVEKQ…RIVITIPCRN (210 aa)) enclose the Histidine kinase domain. His392 carries the post-translational modification Phosphohistidine; by autocatalysis.

The protein resides in the cell membrane. It catalyses the reaction ATP + protein L-histidine = ADP + protein N-phospho-L-histidine.. Member of the two-component regulatory system YesM/YesN. Probably activates YesN by phosphorylation. The polypeptide is Sensor histidine kinase YesM (yesM) (Bacillus subtilis (strain 168)).